A 160-amino-acid chain; its full sequence is Nucleotide-binding protein VFMJ11_1323 (160 aa).

The protein belongs to the YajQ family.

Its function is as follows. Nucleotide-binding protein. This is Nucleotide-binding protein VFMJ11_1323 from Aliivibrio fischeri (strain MJ11) (Vibrio fischeri).